The chain runs to 201 residues: Imidazoleglycerol-phosphate dehydratase (201 aa).

It belongs to the imidazoleglycerol-phosphate dehydratase family.

Its subcellular location is the cytoplasm. The enzyme catalyses D-erythro-1-(imidazol-4-yl)glycerol 3-phosphate = 3-(imidazol-4-yl)-2-oxopropyl phosphate + H2O. It participates in amino-acid biosynthesis; L-histidine biosynthesis; L-histidine from 5-phospho-alpha-D-ribose 1-diphosphate: step 6/9. In Synechococcus sp. (strain CC9902), this protein is Imidazoleglycerol-phosphate dehydratase.